We begin with the raw amino-acid sequence, 93 residues long: MADITDIKSIVYTEKALNLQEQGVLVVQTTPKVTKNQLKEIFKEYFGVTPLKVNSLRQKGKVKRFRGIEGKRPDYKKFYVKLPEDAKLESLSV.

It belongs to the universal ribosomal protein uL23 family. As to quaternary structure, part of the 50S ribosomal subunit. Contacts protein L29, and trigger factor when it is bound to the ribosome.

In terms of biological role, one of the early assembly proteins it binds 23S rRNA. One of the proteins that surrounds the polypeptide exit tunnel on the outside of the ribosome. Forms the main docking site for trigger factor binding to the ribosome. In Nautilia profundicola (strain ATCC BAA-1463 / DSM 18972 / AmH), this protein is Large ribosomal subunit protein uL23.